A 221-amino-acid chain; its full sequence is Nuclear phosphoprotein UL3 homolog (221 aa).

This sequence belongs to the alphaherpesvirinae HHV-1 UL3 family. In terms of processing, phosphorylated.

The protein resides in the host nucleus. The sequence is that of Nuclear phosphoprotein UL3 homolog from Varicella-zoster virus (strain Oka vaccine) (HHV-3).